The sequence spans 285 residues: Protoheme IX farnesyltransferase (285 aa).

The next 8 membrane-spanning stretches (helical) occupy residues 19–39 (RIIW…GKLM), 40–60 (PLSI…SMII), 90–110 (AIYV…LDNP), 111–131 (LTSF…TVWL), 135–155 (SPLN…AGYA), 165–185 (SILL…ALAL), 220–240 (IPFA…VAGI), and 265–285 (FKFS…TRLI).

Belongs to the UbiA prenyltransferase family. Protoheme IX farnesyltransferase subfamily.

Its subcellular location is the cell membrane. It carries out the reaction heme b + (2E,6E)-farnesyl diphosphate + H2O = Fe(II)-heme o + diphosphate. Its pathway is porphyrin-containing compound metabolism; heme O biosynthesis; heme O from protoheme: step 1/1. Its function is as follows. Converts heme B (protoheme IX) to heme O by substitution of the vinyl group on carbon 2 of heme B porphyrin ring with a hydroxyethyl farnesyl side group. In Metallosphaera sedula (strain ATCC 51363 / DSM 5348 / JCM 9185 / NBRC 15509 / TH2), this protein is Protoheme IX farnesyltransferase.